Reading from the N-terminus, the 432-residue chain is uncharacterized protein (432 aa).

An N6-(pyridoxal phosphate)lysine modification is found at Lys243.

Belongs to the class-II pyridoxal-phosphate-dependent aminotransferase family. Requires pyridoxal 5'-phosphate as cofactor.

Its subcellular location is the cytoplasm. This is an uncharacterized protein from Methanocaldococcus jannaschii (strain ATCC 43067 / DSM 2661 / JAL-1 / JCM 10045 / NBRC 100440) (Methanococcus jannaschii).